Here is a 163-residue protein sequence, read N- to C-terminus: Cyclic pyranopterin monophosphate synthase (163 aa).

Substrate contacts are provided by residues 79-81 and 117-118; these read LCH and ME. Residue Asp132 is part of the active site.

The protein belongs to the MoaC family. As to quaternary structure, homohexamer; trimer of dimers.

It catalyses the reaction (8S)-3',8-cyclo-7,8-dihydroguanosine 5'-triphosphate = cyclic pyranopterin phosphate + diphosphate. Its pathway is cofactor biosynthesis; molybdopterin biosynthesis. Catalyzes the conversion of (8S)-3',8-cyclo-7,8-dihydroguanosine 5'-triphosphate to cyclic pyranopterin monophosphate (cPMP). This is Cyclic pyranopterin monophosphate synthase from Chloroflexus aurantiacus (strain ATCC 29366 / DSM 635 / J-10-fl).